The chain runs to 488 residues: Probable aldehyde dehydrogenase (488 aa).

240–245 (GSSVTG) is an NAD(+) binding site. Catalysis depends on residues Glu262 and Cys296.

This sequence belongs to the aldehyde dehydrogenase family.

The enzyme catalyses an aldehyde + NAD(+) + H2O = a carboxylate + NADH + 2 H(+). Functionally, involved in an alpha-terpineol oxidation system. This is Probable aldehyde dehydrogenase (terPE) from Pseudomonas sp.